Here is a 272-residue protein sequence, read N- to C-terminus: ATP synthase subunit a (272 aa).

5 helical membrane passes run 41–61 (TLNIDSMFFSVVLGLLFLVLF), 101–121 (LIAPLALTIFVWVFLMNLMDL), 147–167 (DVNITLSMALGVFILILFYSI), 212–232 (LFGNMYAGELIFILIAGLLPW), and 243–263 (AIFHILIITLQAFIFMVLTIV).

Belongs to the ATPase A chain family. In terms of assembly, F-type ATPases have 2 components, CF(1) - the catalytic core - and CF(0) - the membrane proton channel. CF(1) has five subunits: alpha(3), beta(3), gamma(1), delta(1), epsilon(1). CF(0) has three main subunits: a(1), b(2) and c(9-12). The alpha and beta chains form an alternating ring which encloses part of the gamma chain. CF(1) is attached to CF(0) by a central stalk formed by the gamma and epsilon chains, while a peripheral stalk is formed by the delta and b chains.

The protein resides in the cell inner membrane. Functionally, key component of the proton channel; it plays a direct role in the translocation of protons across the membrane. This chain is ATP synthase subunit a, found in Cronobacter sakazakii (strain ATCC BAA-894) (Enterobacter sakazakii).